The chain runs to 423 residues: Serine hydroxymethyltransferase 2 (423 aa).

Residues leucine 121 and 125–127 contribute to the (6S)-5,6,7,8-tetrahydrofolate site; that span reads GHL. Lysine 230 is subject to N6-(pyridoxal phosphate)lysine. 356 to 358 contacts (6S)-5,6,7,8-tetrahydrofolate; the sequence is SPF.

The protein belongs to the SHMT family. In terms of assembly, homodimer. Pyridoxal 5'-phosphate serves as cofactor.

Its subcellular location is the cytoplasm. It catalyses the reaction (6R)-5,10-methylene-5,6,7,8-tetrahydrofolate + glycine + H2O = (6S)-5,6,7,8-tetrahydrofolate + L-serine. The protein operates within one-carbon metabolism; tetrahydrofolate interconversion. Its pathway is amino-acid biosynthesis; glycine biosynthesis; glycine from L-serine: step 1/1. In terms of biological role, catalyzes the reversible interconversion of serine and glycine with tetrahydrofolate (THF) serving as the one-carbon carrier. This reaction serves as the major source of one-carbon groups required for the biosynthesis of purines, thymidylate, methionine, and other important biomolecules. Also exhibits THF-independent aldolase activity toward beta-hydroxyamino acids, producing glycine and aldehydes, via a retro-aldol mechanism. The polypeptide is Serine hydroxymethyltransferase 2 (Pectobacterium atrosepticum (strain SCRI 1043 / ATCC BAA-672) (Erwinia carotovora subsp. atroseptica)).